The sequence spans 517 residues: Succinyl-CoA:3-ketoacid coenzyme A transferase 2, mitochondrial (517 aa).

The transit peptide at 1 to 39 (MAALRLLASVLGRGVPAGGSGLALSQGCARCFATSPRLR) directs the protein to the mitochondrion. The 5-glutamyl coenzyme A thioester intermediate role is filled by glutamate 341.

Belongs to the 3-oxoacid CoA-transferase family. As to quaternary structure, homodimer. As to expression, testis specific.

It is found in the mitochondrion. It carries out the reaction a 3-oxo acid + succinyl-CoA = a 3-oxoacyl-CoA + succinate. The protein operates within ketone metabolism; succinyl-CoA degradation; acetoacetyl-CoA from succinyl-CoA: step 1/1. Functionally, key enzyme for ketone body catabolism. Transfers the CoA moiety from succinate to acetoacetate. Formation of the enzyme-CoA intermediate proceeds via an unstable anhydride species formed between the carboxylate groups of the enzyme and substrate. The protein is Succinyl-CoA:3-ketoacid coenzyme A transferase 2, mitochondrial (OXCT2) of Homo sapiens (Human).